The primary structure comprises 524 residues: Ribonuclease Y (524 aa).

The helical transmembrane segment at 3-23 (IVINLLLLVLAALVAFVAGFF) threads the bilayer. A KH domain is found at 214–280 (ALSVVHIQSD…KLTLKKLLAD (67 aa)). Residues 340–432 (LLQHSREVAM…VDAANTISLS (93 aa)) enclose the HD domain.

This sequence belongs to the RNase Y family.

The protein localises to the cell membrane. Endoribonuclease that initiates mRNA decay. In Chlorobium chlorochromatii (strain CaD3), this protein is Ribonuclease Y.